A 546-amino-acid chain; its full sequence is CTP synthase (546 aa).

The interval 1-269 (MADTKYIFVT…DKVTLKKLAL (269 aa)) is amidoligase domain. Ser15 is a CTP binding site. Ser15 serves as a coordination point for UTP. 16–21 (SLGKGI) is an ATP binding site. Residue Tyr56 coordinates L-glutamine. Asp73 serves as a coordination point for ATP. Asp73 and Glu143 together coordinate Mg(2+). CTP contacts are provided by residues 150 to 152 (DIE), 190 to 195 (KTKPTQ), and Lys226. Residues 190-195 (KTKPTQ) and Lys226 each bind UTP. The 243-residue stretch at 295-537 (HIGLIGKYVE…VKAAHEHSVK (243 aa)) folds into the Glutamine amidotransferase type-1 domain. Gly357 contributes to the L-glutamine binding site. Cys384 serves as the catalytic Nucleophile; for glutamine hydrolysis. L-glutamine contacts are provided by residues 385 to 388 (LGMQ), Glu408, and Arg465. Catalysis depends on residues His510 and Glu512.

The protein belongs to the CTP synthase family. Homotetramer.

It carries out the reaction UTP + L-glutamine + ATP + H2O = CTP + L-glutamate + ADP + phosphate + 2 H(+). The enzyme catalyses L-glutamine + H2O = L-glutamate + NH4(+). The catalysed reaction is UTP + NH4(+) + ATP = CTP + ADP + phosphate + 2 H(+). It functions in the pathway pyrimidine metabolism; CTP biosynthesis via de novo pathway; CTP from UDP: step 2/2. Its activity is regulated as follows. Allosterically activated by GTP, when glutamine is the substrate; GTP has no effect on the reaction when ammonia is the substrate. The allosteric effector GTP functions by stabilizing the protein conformation that binds the tetrahedral intermediate(s) formed during glutamine hydrolysis. Inhibited by the product CTP, via allosteric rather than competitive inhibition. Catalyzes the ATP-dependent amination of UTP to CTP with either L-glutamine or ammonia as the source of nitrogen. Regulates intracellular CTP levels through interactions with the four ribonucleotide triphosphates. This chain is CTP synthase, found in Christiangramia forsetii (strain DSM 17595 / CGMCC 1.15422 / KT0803) (Gramella forsetii).